Here is a 419-residue protein sequence, read N- to C-terminus: Vacuolar aspartic protease (419 aa).

A signal peptide spans Met-1 to Ala-22. Residues Tyr-104 to Ala-415 enclose the Peptidase A1 domain. Residue Asp-122 is part of the active site. Residues Cys-135 and Cys-140 are joined by a disulfide bond. The N-linked (GlcNAc...) asparagine glycan is linked to Asn-157. Asp-307 is a catalytic residue. A disulfide bridge connects residues Cys-341 and Cys-374. Asn-358 carries an N-linked (GlcNAc...) asparagine glycan. The Microbody targeting signal signature appears at Thr-417–Val-419.

It belongs to the peptidase A1 family.

Its subcellular location is the vacuole. The chain is Vacuolar aspartic protease (APR1) from Candida albicans (Yeast).